The primary structure comprises 468 residues: Adenosylhomocysteinase (468 aa).

Thr-57, Asp-132, and Glu-194 together coordinate substrate. 195 to 197 (TTT) is a binding site for NAD(+). Positions 224 and 228 each coordinate substrate. NAD(+) is bound by residues Asn-229, 258 to 263 (GFGDVG), Glu-281, Asn-316, 337 to 339 (IGH), and Asn-382.

Belongs to the adenosylhomocysteinase family. The cofactor is NAD(+).

It localises to the cytoplasm. It carries out the reaction S-adenosyl-L-homocysteine + H2O = L-homocysteine + adenosine. It participates in amino-acid biosynthesis; L-homocysteine biosynthesis; L-homocysteine from S-adenosyl-L-homocysteine: step 1/1. Functionally, may play a key role in the regulation of the intracellular concentration of adenosylhomocysteine. The protein is Adenosylhomocysteinase of Methylorubrum extorquens (strain CM4 / NCIMB 13688) (Methylobacterium extorquens).